The primary structure comprises 606 residues: Zinc finger protein 214 (606 aa).

The 81-residue stretch at 3–83 folds into the KRAB domain; it reads VTFEDVTIIF…GAQMYENQNY (81 aa). The segment at 275 to 297 adopts a C2H2-type 1; degenerate zinc-finger fold; the sequence is YGCDEVDGNFHQSSGVHFHQRVH. The segment at 303-325 adopts a C2H2-type 2 zinc-finger fold; that stretch reads YSCNACGKSFSQISSLHNHQRVH. Residues 330-352 form a C2H2-type 3; degenerate zinc finger; it reads FYKIECDKDLSRNSLLHIHQRLH. 8 C2H2-type zinc fingers span residues 358 to 380, 386 to 408, 414 to 436, 442 to 464, 470 to 492, 498 to 520, 526 to 548, and 554 to 576; these read FKCN…QRVH, YKCD…QLVH, YKCE…QRVH, YKCD…QRVH, YTCP…QRVH, YKCH…QRVH, and YQCA…QRVH.

Belongs to the krueppel C2H2-type zinc-finger protein family.

It localises to the nucleus. May be involved in transcriptional regulation. The polypeptide is Zinc finger protein 214 (ZNF214) (Homo sapiens (Human)).